The sequence spans 86 residues: MANIKSQKKRVLTNEKAHKRNVAVKSSLKTAVRATREAIAAGDKAAAEAAYKVAAQKLDKAAGAGVIHKNQAANRKSGLAVAINAL.

Belongs to the bacterial ribosomal protein bS20 family.

Binds directly to 16S ribosomal RNA. The sequence is that of Small ribosomal subunit protein bS20 from Bifidobacterium adolescentis (strain ATCC 15703 / DSM 20083 / NCTC 11814 / E194a).